A 227-amino-acid chain; its full sequence is Cytochrome c oxidase subunit 2 (227 aa).

Residues 1–14 (MAYPFQLGLQDATS) are Mitochondrial intermembrane-facing. Residues 15–45 (PIMEELTNFHDHTLMIVFLISSLVLYIISLM) traverse the membrane as a helical segment. At 46 to 59 (LTTKLTHTSTMDAQ) the chain is on the mitochondrial matrix side. A helical membrane pass occupies residues 60–87 (EVETIWTILPAVILILIALPSLRILYMM). Residues 88-227 (DEINNPALTV…HFENWSASMI (140 aa)) are Mitochondrial intermembrane-facing. Cu cation-binding residues include histidine 161, cysteine 196, glutamate 198, cysteine 200, histidine 204, and methionine 207. Glutamate 198 serves as a coordination point for Mg(2+).

This sequence belongs to the cytochrome c oxidase subunit 2 family. As to quaternary structure, component of the cytochrome c oxidase (complex IV, CIV), a multisubunit enzyme composed of 14 subunits. The complex is composed of a catalytic core of 3 subunits MT-CO1, MT-CO2 and MT-CO3, encoded in the mitochondrial DNA, and 11 supernumerary subunits COX4I, COX5A, COX5B, COX6A, COX6B, COX6C, COX7A, COX7B, COX7C, COX8 and NDUFA4, which are encoded in the nuclear genome. The complex exists as a monomer or a dimer and forms supercomplexes (SCs) in the inner mitochondrial membrane with NADH-ubiquinone oxidoreductase (complex I, CI) and ubiquinol-cytochrome c oxidoreductase (cytochrome b-c1 complex, complex III, CIII), resulting in different assemblies (supercomplex SCI(1)III(2)IV(1) and megacomplex MCI(2)III(2)IV(2)). Found in a complex with TMEM177, COA6, COX18, COX20, SCO1 and SCO2. Interacts with TMEM177 in a COX20-dependent manner. Interacts with COX20. Interacts with COX16. Requires Cu cation as cofactor.

It localises to the mitochondrion inner membrane. The enzyme catalyses 4 Fe(II)-[cytochrome c] + O2 + 8 H(+)(in) = 4 Fe(III)-[cytochrome c] + 2 H2O + 4 H(+)(out). Component of the cytochrome c oxidase, the last enzyme in the mitochondrial electron transport chain which drives oxidative phosphorylation. The respiratory chain contains 3 multisubunit complexes succinate dehydrogenase (complex II, CII), ubiquinol-cytochrome c oxidoreductase (cytochrome b-c1 complex, complex III, CIII) and cytochrome c oxidase (complex IV, CIV), that cooperate to transfer electrons derived from NADH and succinate to molecular oxygen, creating an electrochemical gradient over the inner membrane that drives transmembrane transport and the ATP synthase. Cytochrome c oxidase is the component of the respiratory chain that catalyzes the reduction of oxygen to water. Electrons originating from reduced cytochrome c in the intermembrane space (IMS) are transferred via the dinuclear copper A center (CU(A)) of subunit 2 and heme A of subunit 1 to the active site in subunit 1, a binuclear center (BNC) formed by heme A3 and copper B (CU(B)). The BNC reduces molecular oxygen to 2 water molecules using 4 electrons from cytochrome c in the IMS and 4 protons from the mitochondrial matrix. This chain is Cytochrome c oxidase subunit 2 (MT-CO2), found in Berylmys bowersi (Bower's white-toothed rat).